The primary structure comprises 369 residues: D-alanine--D-alanine ligase (369 aa).

One can recognise an ATP-grasp domain in the interval 152-359 (KKLFAAEGLP…YPSLLATMVE (208 aa)). 180–235 (RERLGLPVFVKPARGGSSIGVSRVSSWDELDAAVAAARDHDPKVIVEAAIAGRELE) provides a ligand contact to ATP. Mg(2+)-binding residues include D314, E326, and N328.

The protein belongs to the D-alanine--D-alanine ligase family. It depends on Mg(2+) as a cofactor. Mn(2+) serves as cofactor.

The protein resides in the cytoplasm. The catalysed reaction is 2 D-alanine + ATP = D-alanyl-D-alanine + ADP + phosphate + H(+). It functions in the pathway cell wall biogenesis; peptidoglycan biosynthesis. Its function is as follows. Cell wall formation. This is D-alanine--D-alanine ligase from Mycobacterium avium (strain 104).